The primary structure comprises 401 residues: CCA-adding enzyme (401 aa).

G32 and R35 together coordinate ATP. CTP contacts are provided by G32 and R35. The Mg(2+) site is built by D45 and D47. The ATP site is built by R116, D159, R162, R165, and R168. CTP is bound by residues R116, D159, R162, R165, and R168.

The protein belongs to the tRNA nucleotidyltransferase/poly(A) polymerase family. Bacterial CCA-adding enzyme type 3 subfamily. As to quaternary structure, homodimer. It depends on Mg(2+) as a cofactor.

It carries out the reaction a tRNA precursor + 2 CTP + ATP = a tRNA with a 3' CCA end + 3 diphosphate. The catalysed reaction is a tRNA with a 3' CCA end + 2 CTP + ATP = a tRNA with a 3' CCACCA end + 3 diphosphate. Its function is as follows. Catalyzes the addition and repair of the essential 3'-terminal CCA sequence in tRNAs without using a nucleic acid template. Adds these three nucleotides in the order of C, C, and A to the tRNA nucleotide-73, using CTP and ATP as substrates and producing inorganic pyrophosphate. tRNA 3'-terminal CCA addition is required both for tRNA processing and repair. Also involved in tRNA surveillance by mediating tandem CCA addition to generate a CCACCA at the 3' terminus of unstable tRNAs. While stable tRNAs receive only 3'-terminal CCA, unstable tRNAs are marked with CCACCA and rapidly degraded. This is CCA-adding enzyme from Streptococcus mutans serotype c (strain ATCC 700610 / UA159).